Reading from the N-terminus, the 175-residue chain is Protein LAZY 3 (175 aa).

The disordered stretch occupies residues 9-39 (RKLSGKKRVPTSDSSQEPSSPPLSKEVQGLP). Positions 44–50 (TFLAIGT) match the IGT motif motif.

The protein belongs to the LAZY family. In terms of tissue distribution, specifically expressed in roots. Expressed in root tips of young seedlings.

Its function is as follows. Involved in the regulation of root gravitropism. Functions redundantly with LAZY2 and LAZY4 in the control of root gravitropism. Functions redundantly with LAZY1, LAZY2 and LAZY4 to control plant architecture by coupling gravity sensing to the formation of auxin gradients. The chain is Protein LAZY 3 from Arabidopsis thaliana (Mouse-ear cress).